The primary structure comprises 264 residues: Hydroxyethylthiazole kinase (264 aa).

Met-55 lines the substrate pocket. ATP contacts are provided by Arg-130 and Ser-176. Residue Gly-203 participates in substrate binding.

The protein belongs to the Thz kinase family. The cofactor is Mg(2+).

The enzyme catalyses 5-(2-hydroxyethyl)-4-methylthiazole + ATP = 4-methyl-5-(2-phosphooxyethyl)-thiazole + ADP + H(+). It participates in cofactor biosynthesis; thiamine diphosphate biosynthesis; 4-methyl-5-(2-phosphoethyl)-thiazole from 5-(2-hydroxyethyl)-4-methylthiazole: step 1/1. Catalyzes the phosphorylation of the hydroxyl group of 4-methyl-5-beta-hydroxyethylthiazole (THZ). The protein is Hydroxyethylthiazole kinase of Leptospira borgpetersenii serovar Hardjo-bovis (strain JB197).